The primary structure comprises 429 residues: Keratin, type I cytoskeletal 20 (429 aa).

The segment at 1-26 is disordered; sequence MDFSRRSFHRSLSSSSQGPALSTSGS. The head stretch occupies residues 1–74; the sequence is MDFSRRSFHR…SNGGDLFGGN (74 aa). Residues 10-26 show a composition bias toward low complexity; sequence RSLSSSSQGPALSTSGS. Phosphoserine is present on residues serine 13, serine 16, and serine 26. A coil 1A region spans residues 75–110; the sequence is EKLAMQNLNDRLASYLEKVRSLEQSNSKLEAQIKQW. In terms of domain architecture, IF rod spans 75-386; sequence EKLAMQNLND…RLLEGEDIKT (312 aa). The interval 111-128 is linker 1; the sequence is YETNAPSTIRDYSSYYAQ. Residues 129–220 are coil 1B; the sequence is IKELQDQIKD…KEHQEEVEVL (92 aa). Residues 221–243 are linker 12; sequence RRQLGNNVNVEVDAAPGLNLGEI. The tract at residues 244–382 is coil 2; the sequence is MNEMRQKYEI…ATYRRLLEGE (139 aa). Residues 383-429 are tail; sequence DIKTTEYQLNTLEAKDIKKTRKIKTVVEEVVDGKVVSSEVKEIEENI.

Belongs to the intermediate filament family. In terms of assembly, heterotetramer of two type I and two type II keratins. Associates with KRT8. In terms of processing, hyperphosphorylation at Ser-13 occurs during the early stages of apoptosis but becomes less prominent during the later stages. Phosphorylation at Ser-13 also increases in response to stress brought on by cell injury. Post-translationally, proteolytically cleaved by caspases during apoptosis. Cleavage occurs at Asp-233. In terms of tissue distribution, expressed predominantly in the intestinal epithelium in differentiated villus cells.

In terms of biological role, plays a significant role in maintaining keratin filament organization in intestinal epithelia. When phosphorylated, plays a role in the secretion of mucin in the small intestine. The chain is Keratin, type I cytoskeletal 20 (Krt20) from Rattus norvegicus (Rat).